A 684-amino-acid polypeptide reads, in one-letter code: Amino-acid acetyltransferase, mitochondrial (684 aa).

Positions 414–439 are disordered; sequence PQDATNSASEPRDPSQLSTVATRRKR. A compositionally biased stretch (polar residues) spans 415–434; it reads QDATNSASEPRDPSQLSTVA. In terms of domain architecture, N-acetyltransferase spans 505-674; that stretch reads GKSRMTLNDP…YEGVCRGIEP (170 aa).

The protein belongs to the acetyltransferase family.

The protein resides in the mitochondrion. The enzyme catalyses L-glutamate + acetyl-CoA = N-acetyl-L-glutamate + CoA + H(+). It functions in the pathway amino-acid biosynthesis; L-arginine biosynthesis; N(2)-acetyl-L-ornithine from L-glutamate: step 1/4. N-acetylglutamate synthase involved in arginine biosynthesis. This chain is Amino-acid acetyltransferase, mitochondrial (ARG2), found in Ajellomyces capsulatus (strain NAm1 / WU24) (Darling's disease fungus).